We begin with the raw amino-acid sequence, 206 residues long: Acireductone dioxygenase (206 aa).

Residues His102, His104, Glu108, and His146 each coordinate Fe(2+). Residues His102, His104, Glu108, and His146 each contribute to the Ni(2+) site.

Belongs to the acireductone dioxygenase (ARD) family. In terms of assembly, monomer. Requires Fe(2+) as cofactor. Ni(2+) serves as cofactor.

The catalysed reaction is 1,2-dihydroxy-5-(methylsulfanyl)pent-1-en-3-one + O2 = 3-(methylsulfanyl)propanoate + CO + formate + 2 H(+). The enzyme catalyses 1,2-dihydroxy-5-(methylsulfanyl)pent-1-en-3-one + O2 = 4-methylsulfanyl-2-oxobutanoate + formate + 2 H(+). It participates in amino-acid biosynthesis; L-methionine biosynthesis via salvage pathway; L-methionine from S-methyl-5-thio-alpha-D-ribose 1-phosphate: step 5/6. Catalyzes 2 different reactions between oxygen and the acireductone 1,2-dihydroxy-3-keto-5-methylthiopentene (DHK-MTPene) depending upon the metal bound in the active site. Fe-containing acireductone dioxygenase (Fe-ARD) produces formate and 2-keto-4-methylthiobutyrate (KMTB), the alpha-ketoacid precursor of methionine in the methionine recycle pathway. Ni-containing acireductone dioxygenase (Ni-ARD) produces methylthiopropionate, carbon monoxide and formate, and does not lie on the methionine recycle pathway. The protein is Acireductone dioxygenase of Frankia alni (strain DSM 45986 / CECT 9034 / ACN14a).